A 354-amino-acid polypeptide reads, in one-letter code: UDP-galactose transporter homolog 1 (354 aa).

The next 5 helical transmembrane spans lie at 6–26 (GGSI…FLTW), 54–74 (LVIN…YSVV), 95–112 (FFKS…SSPL), 123–143 (LAYL…HFVL), and 148–168 (FPLY…IFTL). Asn202 carries N-linked (GlcNAc...) asparagine glycosylation. A run of 4 helical transmembrane segments spans residues 227-247 (YLMC…ALIF), 268-288 (MNIL…FIIL), 295-317 (ILIT…LFGH), and 321-340 (GLQW…EALV).

This sequence belongs to the nucleotide-sugar transporter family. SLC35B subfamily.

It localises to the endoplasmic reticulum membrane. May be involved in specific transport of UDP-Gal from the cytosol to the Golgi lumen. Involved in the maintenance of optimal conditions for the folding of secretory pathway proteins in the endoplasmic reticulum. The protein is UDP-galactose transporter homolog 1 (HUT1) of Debaryomyces hansenii (strain ATCC 36239 / CBS 767 / BCRC 21394 / JCM 1990 / NBRC 0083 / IGC 2968) (Yeast).